The primary structure comprises 379 residues: Alcohol dehydrogenase class-2 isozyme 2 (379 aa).

Zn(2+) is bound by residues Cys-47, His-69, Cys-99, Cys-102, Cys-105, Cys-113, and Cys-176. NAD(+)-binding positions include Gly-205–Gly-210, Asp-229, Lys-234, Val-298–Val-300, and Arg-374.

Belongs to the zinc-containing alcohol dehydrogenase family. Class-II subfamily. As to quaternary structure, homodimer. Zn(2+) serves as cofactor.

It localises to the cytoplasm. The enzyme catalyses a primary alcohol + NAD(+) = an aldehyde + NADH + H(+). It carries out the reaction a secondary alcohol + NAD(+) = a ketone + NADH + H(+). This Oryctolagus cuniculus (Rabbit) protein is Alcohol dehydrogenase class-2 isozyme 2 (ADH2-2).